The primary structure comprises 619 residues: Lysophospholipid acyltransferase (619 aa).

Residues 1–19 (MYNPVDAVLTKIITNYGID) lie on the Lumenal side of the membrane. Residues 20–39 (SFTLRYAICLLGSFPLNAIL) traverse the membrane as a helical segment. The Cytoplasmic portion of the chain corresponds to 40-51 (KRIPEKRIGLKC). A helical transmembrane segment spans residues 52 to 72 (CFIISMSMFYLFGVLNLVSGF). Topologically, residues 73–92 (RTLFISTMFTYLISRFYRSK) are lumenal. Residues 93–113 (FMPHLNFMFVMGHLAINHIHA) form a helical membrane-spanning segment. Residues 114-231 (QFLNEQTQTT…GERRQIPKNG (118 aa)) lie on the Cytoplasmic side of the membrane. D146 acts as the Nucleophile in catalysis. Residues 232-252 (KLALWKVVQGLAWMILSTLGM) form a helical membrane-spanning segment. Over 253–274 (KHFPVKYVLDKDGFPTRSFIFR) the chain is Lumenal. Residues 275 to 295 (IHYLFLLGFIHRFKYYAAWTI) form a helical membrane-spanning segment. Over 296-429 (SEGSCILCGL…TPLPSKKIYD (134 aa)) the chain is Cytoplasmic. E297 serves as the catalytic Nucleophile. H382 is a catalytic residue. Residues 430-450 (LVGIYAIKLAFGYMVQPFIIL) form a helical membrane-spanning segment. Residues 451 to 456 (DLKPSL) lie on the Lumenal side of the membrane. A helical transmembrane segment spans residues 457–477 (MVWGSVYFYVHIIVAFSFFLF). Residues 478-619 (RGPYAKQVTE…SPKPISKKEE (142 aa)) lie on the Cytoplasmic side of the membrane. S513 is modified (phosphoserine). Positions 545–593 (ELEKWDNAKEDWEDFCKDYKEWRNKNGLEIEEENLSKAFERFKQEFSNA) form a coiled coil. The segment at 592–619 (NAASGSGERVRKMSFSGYSPKPISKKEE) is disordered. Phosphoserine is present on residues S605, S610, and S615.

The protein belongs to the membrane-bound acyltransferase family.

It is found in the endoplasmic reticulum membrane. The catalysed reaction is a 1-acyl-sn-glycero-3-phosphate + an acyl-CoA = a 1,2-diacyl-sn-glycero-3-phosphate + CoA. It catalyses the reaction a 1-acyl-sn-glycero-3-phosphocholine + an acyl-CoA = a 1,2-diacyl-sn-glycero-3-phosphocholine + CoA. It carries out the reaction 1-acyl-sn-glycero-3-phospho-(1'-sn-glycerol) + an acyl-CoA = a 1,2-diacyl-sn-glycero-3-phospho-(1'-sn-glycerol) + CoA. The enzyme catalyses a 1-acyl-sn-glycero-3-phospho-(1D-myo-inositol) + an acyl-CoA = a 1,2-diacyl-sn-glycero-3-phospho-(1D-myo-inositol) + CoA. The catalysed reaction is a 1-acyl-sn-glycero-3-phospho-L-serine + an acyl-CoA = a 1,2-diacyl-sn-glycero-3-phospho-L-serine + CoA. It catalyses the reaction a 1-acyl-sn-glycero-3-phosphoethanolamine + an acyl-CoA = a 1,2-diacyl-sn-glycero-3-phosphoethanolamine + CoA. It carries out the reaction 1-(9Z-octadecenoyl)-sn-glycero-3-phosphoethanolamine + (9Z)-octadecenoyl-CoA = 1,2-di-(9Z-octadecenoyl)-sn-glycero-3-phosphoethanolamine + CoA. The enzyme catalyses 1-(9Z-octadecenoyl)-sn-glycero-3-phosphoethanolamine + (9Z)-hexadecenoyl-CoA = 1-(9Z)-octadecenoyl-2-(9Z)-hexadecenoyl-sn-glycero-3-phosphoethanolamine + CoA. The catalysed reaction is 1-(9Z-octadecenoyl)-sn-glycero-3-phosphoethanolamine + hexadecanoyl-CoA = 1-(9Z-octadecenoyl)-2-hexadecanoyl-sn-glycero-3-phosphoethanolamine + CoA. It catalyses the reaction 1-(9Z-octadecenoyl)-sn-glycero-3-phosphoethanolamine + tetradecanoyl-CoA = 1-(9Z)-octadecenoyl-2-tetradecanoyl-sn-glycero-3-phosphoethanolamine + CoA. It carries out the reaction 1-(9Z-octadecenoyl)-sn-glycero-3-phosphate + (9Z)-octadecenoyl-CoA = 1,2-di-(9Z-octadecenoyl)-sn-glycero-3-phosphate + CoA. The enzyme catalyses (9Z)-hexadecenoyl-CoA + 1-hexadecanoyl-sn-glycero-3-phosphocholine = 1-hexadecanoyl-2-(9Z-hexadecenoyl)-sn-glycero-3-phosphocholine + CoA. The catalysed reaction is 1-hexadecanoyl-sn-glycero-3-phosphocholine + (9Z)-octadecenoyl-CoA = 1-hexadecanoyl-2-(9Z-octadecenoyl)-sn-glycero-3-phosphocholine + CoA. It catalyses the reaction 1-tetradecanoyl-sn-glycero-3-phosphoethanolamine + (9Z)-octadecenoyl-CoA = 1-tetradecanoyl-2-(9Z-octadecenoyl)-sn-glycero-3-phosphoethanolamine + CoA. It carries out the reaction 1-(9Z-octadecenoyl)-sn-glycero-3-phospho-L-serine + (9Z)-octadecenoyl-CoA = 1,2-di-(9Z)-octadecenoyl-sn-glycero-3-phospho-L-serine + CoA. The enzyme catalyses a 1-acyl-sn-glycero-3-phospho-(1D-myo-inositol) + (9Z)-octadecenoyl-CoA = a 1-acyl-2-(9Z-octadecenoyl)-sn-glycero-3-phospho-(1D-myo-inositol) + CoA. The protein operates within lipid metabolism; phospholipid metabolism. Functionally, broad specificity membrane-bound O-acyltransferase that mediates the incorporation of unsaturated acyl chains into the sn-2 position of various lysophospholipids. Preferentially acylates lysophosphocholine (LPC), but also lysophosphoethanolamine (LPE), lysophosphatidylglycerol (LPG), lysophosphatidic acid (LPA), lysophosphoethanolamine (LPE), lysophosphoinositol (LPI), and lysophosphoserine (LPS). Prefers an acyl residue to an alkyl residue at the sn-1 position of lysophospholipid acceptors. Accepts acyl chains in acyl-CoA from C-2 to C-20, and shows strong preference for unsaturated acyl-CoAs with 16-20 carbons. Together with SLC1, plays a central role in phosphatidic acid (PA) biosynthesis. PA is the intermediate, from which all glycerophospholipids are synthesized. Can also introduce an acyl chain at the sn-1 position of the lysophosphatidylcholine analog 1-hydroxy-2-hexadecyl-sn-glycero-3-phosphocholine (HHPC). This Saccharomyces cerevisiae (strain ATCC 204508 / S288c) (Baker's yeast) protein is Lysophospholipid acyltransferase.